The following is a 239-amino-acid chain: Phosphoribosylaminoimidazole-succinocarboxamide synthase (239 aa).

It belongs to the SAICAR synthetase family.

The catalysed reaction is 5-amino-1-(5-phospho-D-ribosyl)imidazole-4-carboxylate + L-aspartate + ATP = (2S)-2-[5-amino-1-(5-phospho-beta-D-ribosyl)imidazole-4-carboxamido]succinate + ADP + phosphate + 2 H(+). The protein operates within purine metabolism; IMP biosynthesis via de novo pathway; 5-amino-1-(5-phospho-D-ribosyl)imidazole-4-carboxamide from 5-amino-1-(5-phospho-D-ribosyl)imidazole-4-carboxylate: step 1/2. The chain is Phosphoribosylaminoimidazole-succinocarboxamide synthase from Bacillus cereus (strain AH187).